The sequence spans 180 residues: MRILGIDPGLRVTGFGVIDVSGHRLAYVASGVIRTPTADLATRLGTIFQGVSTLVREHAPDQAAIEQVFVNVNPQSTLLLGQARGAAICGLVAGGLPVAEYTALQLKQAVVGYGRATKSQMQEMVTRLLNLSGQPGSDAADALGMAICHAHSGNTLGTISGLAPALARKGLRVRRGRLVG.

Active-site residues include Asp-7, Glu-66, and Asp-138. Mg(2+) is bound by residues Asp-7, Glu-66, and Asp-138.

Belongs to the RuvC family. As to quaternary structure, homodimer which binds Holliday junction (HJ) DNA. The HJ becomes 2-fold symmetrical on binding to RuvC with unstacked arms; it has a different conformation from HJ DNA in complex with RuvA. In the full resolvosome a probable DNA-RuvA(4)-RuvB(12)-RuvC(2) complex forms which resolves the HJ. The cofactor is Mg(2+).

The protein resides in the cytoplasm. It carries out the reaction Endonucleolytic cleavage at a junction such as a reciprocal single-stranded crossover between two homologous DNA duplexes (Holliday junction).. Its function is as follows. The RuvA-RuvB-RuvC complex processes Holliday junction (HJ) DNA during genetic recombination and DNA repair. Endonuclease that resolves HJ intermediates. Cleaves cruciform DNA by making single-stranded nicks across the HJ at symmetrical positions within the homologous arms, yielding a 5'-phosphate and a 3'-hydroxyl group; requires a central core of homology in the junction. The consensus cleavage sequence is 5'-(A/T)TT(C/G)-3'. Cleavage occurs on the 3'-side of the TT dinucleotide at the point of strand exchange. HJ branch migration catalyzed by RuvA-RuvB allows RuvC to scan DNA until it finds its consensus sequence, where it cleaves and resolves the cruciform DNA. This Burkholderia vietnamiensis (strain G4 / LMG 22486) (Burkholderia cepacia (strain R1808)) protein is Crossover junction endodeoxyribonuclease RuvC.